Consider the following 159-residue polypeptide: Phosphopantetheine adenylyltransferase (159 aa).

Residue Thr10 participates in substrate binding. Residues 10–11 (TF) and His18 contribute to the ATP site. Residues Lys42, Leu73, and Arg87 each contribute to the substrate site. ATP contacts are provided by residues 88-90 (GLR), Glu98, and 123-129 (YSYVSGT).

Belongs to the bacterial CoaD family. Homohexamer. Mg(2+) is required as a cofactor.

It is found in the cytoplasm. It carries out the reaction (R)-4'-phosphopantetheine + ATP + H(+) = 3'-dephospho-CoA + diphosphate. It participates in cofactor biosynthesis; coenzyme A biosynthesis; CoA from (R)-pantothenate: step 4/5. Reversibly transfers an adenylyl group from ATP to 4'-phosphopantetheine, yielding dephospho-CoA (dPCoA) and pyrophosphate. This chain is Phosphopantetheine adenylyltransferase, found in Coxiella burnetii (strain CbuK_Q154) (Coxiella burnetii (strain Q154)).